The following is a 125-amino-acid chain: Acidic phospholipase A2 6 (125 aa).

Serine 1 is a signal peptide. The propeptide occupies 2-7; it reads NRPMPL. 7 disulfides stabilise this stretch: cysteine 18–cysteine 77, cysteine 33–cysteine 124, cysteine 35–cysteine 50, cysteine 49–cysteine 105, cysteine 56–cysteine 98, cysteine 66–cysteine 91, and cysteine 84–cysteine 96. Aspartate 30 serves as a coordination point for Zn(2+). Ca(2+) contacts are provided by tyrosine 34 and glycine 36. The active site involves histidine 53. Position 54 (aspartate 54) interacts with Ca(2+). The active site involves aspartate 99.

Heterodimer formed between isoform 5 and isoform 6 in presence of zinc ion and monomer in absence of zinc ion. The cofactor is Ca(2+). In terms of tissue distribution, expressed by the venom gland.

It is found in the secreted. It catalyses the reaction a 1,2-diacyl-sn-glycero-3-phosphocholine + H2O = a 1-acyl-sn-glycero-3-phosphocholine + a fatty acid + H(+). Its function is as follows. PLA2 catalyzes the calcium-dependent hydrolysis of the 2-acyl groups in 3-sn-phosphoglycerides. The sequence is that of Acidic phospholipase A2 6 from Naja sagittifera (Andaman cobra).